The following is a 373-amino-acid chain: 3 beta-hydroxysteroid dehydrogenase/Delta 5--&gt;4-isomerase type 6 (373 aa).

Catalysis depends on Tyr-155, which acts as the Proton acceptor. An NAD(+)-binding site is contributed by Lys-159. Residues 288–308 (VPLLYWLAFMLETVSFLLSPI) traverse the membrane as a helical segment.

Belongs to the 3-beta-HSD family. As to expression, expressed in skin and testis.

It localises to the endoplasmic reticulum membrane. It is found in the mitochondrion membrane. It carries out the reaction a 3beta-hydroxy-Delta(5)-steroid + NAD(+) = a 3-oxo-Delta(5)-steroid + NADH + H(+). The catalysed reaction is a 3-oxo-Delta(5)-steroid = a 3-oxo-Delta(4)-steroid. Its pathway is lipid metabolism; steroid biosynthesis. 3-beta-HSD is a bifunctional enzyme, that catalyzes the oxidative conversion of Delta(5)-ene-3-beta-hydroxy steroid, and the oxidative conversion of ketosteroids. The 3-beta-HSD enzymatic system plays a crucial role in the biosynthesis of all classes of hormonal steroids. May be involved in local production of progesterone. In Mus musculus (Mouse), this protein is 3 beta-hydroxysteroid dehydrogenase/Delta 5--&gt;4-isomerase type 6 (Hsd3b6).